We begin with the raw amino-acid sequence, 434 residues long: Enolase (434 aa).

Residue glutamine 163 participates in (2R)-2-phosphoglycerate binding. Glutamate 205 serves as the catalytic Proton donor. Mg(2+) contacts are provided by aspartate 242, glutamate 291, and aspartate 318. Lysine 343, arginine 372, serine 373, and lysine 394 together coordinate (2R)-2-phosphoglycerate. Lysine 343 (proton acceptor) is an active-site residue.

This sequence belongs to the enolase family. It depends on Mg(2+) as a cofactor.

It localises to the cytoplasm. Its subcellular location is the secreted. It is found in the cell surface. The enzyme catalyses (2R)-2-phosphoglycerate = phosphoenolpyruvate + H2O. Its pathway is carbohydrate degradation; glycolysis; pyruvate from D-glyceraldehyde 3-phosphate: step 4/5. Functionally, catalyzes the reversible conversion of 2-phosphoglycerate (2-PG) into phosphoenolpyruvate (PEP). It is essential for the degradation of carbohydrates via glycolysis. The chain is Enolase from Streptococcus sanguinis (strain SK36).